A 673-amino-acid polypeptide reads, in one-letter code: Poly(glycerol-phosphate) alpha-glucosyltransferase (673 aa).

S2 carries the phosphoserine modification.

Belongs to the glycosyltransferase group 1 family. Glycosyltransferase 4 subfamily.

It localises to the cytoplasm. It carries out the reaction 4-O-{[(2R)-1-glycerylphospho](n)-(2R)-1-glycerylphospho}-N-acetyl-beta-D-mannosaminyl-(1-&gt;4)-N-acetyl-alpha-D-glucosaminyl undecaprenyl diphosphate + n UDP-alpha-D-glucose = 4-O-{[(2R)-2-alpha-D-glucosyl-1-glycerylphospho](n)-(2R)-1-glycerylphospho}-N-acetyl-beta-D-mannosaminyl-(1-&gt;4)-N-acetyl-alpha-D-glucosaminyl undecaprenyl diphosphate + n UDP + n H(+). It participates in cell wall biogenesis; poly(glycerol phosphate) teichoic acid biosynthesis. In terms of biological role, catalyzes the addition of glucose to the C-2 hydroxy group of the glycerol units in teichoic acid. The chain is Poly(glycerol-phosphate) alpha-glucosyltransferase (tagE) from Bacillus subtilis (strain 168).